Here is a 443-residue protein sequence, read N- to C-terminus: Phosphoglucosamine mutase (443 aa).

Ser-103 (phosphoserine intermediate) is an active-site residue. Mg(2+) is bound by residues Ser-103, Asp-244, Asp-246, and Asp-248. Position 103 is a phosphoserine (Ser-103).

Belongs to the phosphohexose mutase family. Requires Mg(2+) as cofactor. In terms of processing, activated by phosphorylation.

It catalyses the reaction alpha-D-glucosamine 1-phosphate = D-glucosamine 6-phosphate. Catalyzes the conversion of glucosamine-6-phosphate to glucosamine-1-phosphate. The protein is Phosphoglucosamine mutase of Pelagibacter ubique (strain HTCC1062).